We begin with the raw amino-acid sequence, 360 residues long: Phospho-N-acetylmuramoyl-pentapeptide-transferase (360 aa).

Transmembrane regions (helical) follow at residues 27–47 (ILSVLTALFIAFWVGPIMIRM), 73–93 (TMGGALILVAIVISTLLWGDL), 97–117 (FVWITLGVLFVFGAVGWVDDW), 132–152 (WKYLWLSVGALGAGCALFFTA), 164–184 (FFKSVAINMGWFYIVLTYFVI), 199–219 (GLAIMPTVLVGGALGIFAYAG), 236–256 (AGELVIISAALCGAGLGFLWF), 263–283 (VFMGDVGALSLGAVLGVMAVI), 288–308 (IVLFIMGGVFVMETVSVMLQV), and 337–357 (KIIVRFWIITVILVLVGLATL).

It belongs to the glycosyltransferase 4 family. MraY subfamily. Requires Mg(2+) as cofactor.

The protein localises to the cell inner membrane. It carries out the reaction UDP-N-acetyl-alpha-D-muramoyl-L-alanyl-gamma-D-glutamyl-meso-2,6-diaminopimeloyl-D-alanyl-D-alanine + di-trans,octa-cis-undecaprenyl phosphate = di-trans,octa-cis-undecaprenyl diphospho-N-acetyl-alpha-D-muramoyl-L-alanyl-D-glutamyl-meso-2,6-diaminopimeloyl-D-alanyl-D-alanine + UMP. The protein operates within cell wall biogenesis; peptidoglycan biosynthesis. Catalyzes the initial step of the lipid cycle reactions in the biosynthesis of the cell wall peptidoglycan: transfers peptidoglycan precursor phospho-MurNAc-pentapeptide from UDP-MurNAc-pentapeptide onto the lipid carrier undecaprenyl phosphate, yielding undecaprenyl-pyrophosphoryl-MurNAc-pentapeptide, known as lipid I. The polypeptide is Phospho-N-acetylmuramoyl-pentapeptide-transferase (Alcanivorax borkumensis (strain ATCC 700651 / DSM 11573 / NCIMB 13689 / SK2)).